We begin with the raw amino-acid sequence, 460 residues long: Cysteine--tRNA ligase (460 aa).

Cysteine 28 is a Zn(2+) binding site. The short motif at 30 to 40 (MTVYDYCHLGH) is the 'HIGH' region element. Zn(2+)-binding residues include cysteine 209, histidine 234, and glutamate 238. Positions 266–270 (KMSKS) match the 'KMSKS' region motif. Lysine 269 is an ATP binding site.

Belongs to the class-I aminoacyl-tRNA synthetase family. Monomer. Requires Zn(2+) as cofactor.

It is found in the cytoplasm. The enzyme catalyses tRNA(Cys) + L-cysteine + ATP = L-cysteinyl-tRNA(Cys) + AMP + diphosphate. The protein is Cysteine--tRNA ligase of Pseudomonas fluorescens (strain Pf0-1).